The primary structure comprises 335 residues: Biotin synthase (335 aa).

The 227-residue stretch at 43–269 folds into the Radical SAM core domain; sequence YFGKKVKLNM…INPTKEIRIA (227 aa). The [4Fe-4S] cluster site is built by Cys61, Cys65, and Cys68. Residues Cys104, Cys137, Cys197, and Arg267 each coordinate [2Fe-2S] cluster.

This sequence belongs to the radical SAM superfamily. Biotin synthase family. As to quaternary structure, homodimer. Requires [4Fe-4S] cluster as cofactor. It depends on [2Fe-2S] cluster as a cofactor.

The enzyme catalyses (4R,5S)-dethiobiotin + (sulfur carrier)-SH + 2 reduced [2Fe-2S]-[ferredoxin] + 2 S-adenosyl-L-methionine = (sulfur carrier)-H + biotin + 2 5'-deoxyadenosine + 2 L-methionine + 2 oxidized [2Fe-2S]-[ferredoxin]. Its pathway is cofactor biosynthesis; biotin biosynthesis; biotin from 7,8-diaminononanoate: step 2/2. Its function is as follows. Catalyzes the conversion of dethiobiotin (DTB) to biotin by the insertion of a sulfur atom into dethiobiotin via a radical-based mechanism. The polypeptide is Biotin synthase (Staphylococcus aureus (strain MRSA252)).